The following is a 93-amino-acid chain: Small ribosomal subunit protein uS19 (93 aa).

It belongs to the universal ribosomal protein uS19 family.

Protein S19 forms a complex with S13 that binds strongly to the 16S ribosomal RNA. The chain is Small ribosomal subunit protein uS19 from Campylobacter lari (strain RM2100 / D67 / ATCC BAA-1060).